Here is a 369-residue protein sequence, read N- to C-terminus: 3-dehydroquinate synthase (369 aa).

NAD(+) contacts are provided by residues 75–80, 109–113, 133–134, lysine 146, lysine 155, and 173–176; these read DGEEHK, GVIGD, TT, and TLKT. Zn(2+) is bound by residues glutamate 188, histidine 251, and histidine 268.

Belongs to the sugar phosphate cyclases superfamily. Dehydroquinate synthase family. Co(2+) serves as cofactor. Zn(2+) is required as a cofactor. It depends on NAD(+) as a cofactor.

The protein resides in the cytoplasm. The catalysed reaction is 7-phospho-2-dehydro-3-deoxy-D-arabino-heptonate = 3-dehydroquinate + phosphate. It functions in the pathway metabolic intermediate biosynthesis; chorismate biosynthesis; chorismate from D-erythrose 4-phosphate and phosphoenolpyruvate: step 2/7. Functionally, catalyzes the conversion of 3-deoxy-D-arabino-heptulosonate 7-phosphate (DAHP) to dehydroquinate (DHQ). In Legionella pneumophila (strain Lens), this protein is 3-dehydroquinate synthase.